Consider the following 292-residue polypeptide: 4-hydroxy-tetrahydrodipicolinate synthase (292 aa).

Thr-45 is a binding site for pyruvate. Tyr-133 (proton donor/acceptor) is an active-site residue. Lys-161 serves as the catalytic Schiff-base intermediate with substrate. Ile-203 is a pyruvate binding site.

It belongs to the DapA family. As to quaternary structure, homotetramer; dimer of dimers.

It is found in the cytoplasm. The catalysed reaction is L-aspartate 4-semialdehyde + pyruvate = (2S,4S)-4-hydroxy-2,3,4,5-tetrahydrodipicolinate + H2O + H(+). The protein operates within amino-acid biosynthesis; L-lysine biosynthesis via DAP pathway; (S)-tetrahydrodipicolinate from L-aspartate: step 3/4. In terms of biological role, catalyzes the condensation of (S)-aspartate-beta-semialdehyde [(S)-ASA] and pyruvate to 4-hydroxy-tetrahydrodipicolinate (HTPA). This is 4-hydroxy-tetrahydrodipicolinate synthase from Escherichia fergusonii (strain ATCC 35469 / DSM 13698 / CCUG 18766 / IAM 14443 / JCM 21226 / LMG 7866 / NBRC 102419 / NCTC 12128 / CDC 0568-73).